A 100-amino-acid polypeptide reads, in one-letter code: Integration host factor subunit alpha (100 aa).

Belongs to the bacterial histone-like protein family. Heterodimer of an alpha and a beta chain.

Functionally, this protein is one of the two subunits of integration host factor, a specific DNA-binding protein that functions in genetic recombination as well as in transcriptional and translational control. Involved in hydrogenase gene expression. This chain is Integration host factor subunit alpha (ihfA), found in Rhodobacter capsulatus (Rhodopseudomonas capsulata).